The chain runs to 420 residues: D-tagatose-1,6-bisphosphate aldolase subunit GatZ (420 aa).

It belongs to the GatZ/KbaZ family. GatZ subfamily. As to quaternary structure, forms a complex with GatY.

The protein operates within carbohydrate metabolism; D-tagatose 6-phosphate degradation; D-glyceraldehyde 3-phosphate and glycerone phosphate from D-tagatose 6-phosphate: step 2/2. In terms of biological role, component of the tagatose-1,6-bisphosphate aldolase GatYZ that is required for full activity and stability of the Y subunit. Could have a chaperone-like function for the proper and stable folding of GatY. When expressed alone, GatZ does not show any aldolase activity. Is involved in the catabolism of galactitol. This chain is D-tagatose-1,6-bisphosphate aldolase subunit GatZ, found in Shigella flexneri serotype 5b (strain 8401).